Consider the following 78-residue polypeptide: Sec-independent protein translocase protein TatA (78 aa).

Residues 1-21 (MGGISIWQLLIVALIVVLLFG) form a helical membrane-spanning segment. Residues 40–78 (KSAMSSEEEKKAIEDSASEKTAQTEEKKTESKDKDKEQV) form a disordered region. The segment covering 46–78 (EEEKKAIEDSASEKTAQTEEKKTESKDKDKEQV) has biased composition (basic and acidic residues).

Belongs to the TatA/E family. As to quaternary structure, the Tat system comprises two distinct complexes: a TatABC complex, containing multiple copies of TatA, TatB and TatC subunits, and a separate TatA complex, containing only TatA subunits. Substrates initially bind to the TatABC complex, which probably triggers association of the separate TatA complex to form the active translocon.

The protein localises to the cell inner membrane. Part of the twin-arginine translocation (Tat) system that transports large folded proteins containing a characteristic twin-arginine motif in their signal peptide across membranes. TatA could form the protein-conducting channel of the Tat system. The chain is Sec-independent protein translocase protein TatA from Shewanella sediminis (strain HAW-EB3).